The chain runs to 644 residues: Threonine--tRNA ligase (644 aa).

Positions 1–61 (MPVITLPDGS…EKDTKLTIIT (61 aa)) constitute a TGS domain. Positions 242–535 (DHRRIGADLD…LIEHYEGKFP (294 aa)) are catalytic. Cys-335, His-386, and His-512 together coordinate Zn(2+).

This sequence belongs to the class-II aminoacyl-tRNA synthetase family. In terms of assembly, homodimer. The cofactor is Zn(2+).

The protein resides in the cytoplasm. The enzyme catalyses tRNA(Thr) + L-threonine + ATP = L-threonyl-tRNA(Thr) + AMP + diphosphate + H(+). Its function is as follows. Catalyzes the attachment of threonine to tRNA(Thr) in a two-step reaction: L-threonine is first activated by ATP to form Thr-AMP and then transferred to the acceptor end of tRNA(Thr). Also edits incorrectly charged L-seryl-tRNA(Thr). The polypeptide is Threonine--tRNA ligase (Nitrosococcus oceani (strain ATCC 19707 / BCRC 17464 / JCM 30415 / NCIMB 11848 / C-107)).